The chain runs to 887 residues: Lon protease homolog 2, peroxisomal (887 aa).

The region spanning 11–256 is the Lon N-terminal domain; sequence LGILAFRNKV…KATELVDRHL (246 aa). Residues 72–101 are disordered; the sequence is YPGGGTDSGERNVKSQPGLSDSRKADGKSQ. 409–416 lines the ATP pocket; sequence GPPGVGKT. A Lon proteolytic domain is found at 693 to 878; that stretch reads VSNPGVSVGL…EVLEQAFEGG (186 aa). Residues Ser-784 and Lys-827 contribute to the active site. Residues 885–887 carry the Microbody targeting signal motif; it reads ARL.

It belongs to the peptidase S16 family.

It localises to the peroxisome matrix. The catalysed reaction is Hydrolysis of proteins in presence of ATP.. ATP-dependent serine protease that mediates the selective degradation of misfolded and unassembled polypeptides in the peroxisomal matrix. Necessary for type 2 peroxisome targeting signal (PTS2)-containing protein processing and facilitates peroxisome matrix protein import. The chain is Lon protease homolog 2, peroxisomal from Spinacia oleracea (Spinach).